The chain runs to 118 residues: NADH-quinone oxidoreductase subunit A (118 aa).

Transmembrane regions (helical) follow at residues 5 to 25 (YAFIGIFALAAITFPLLPLVL), 62 to 82 (LYALAFVIFDIETVFLYPWAV), and 87 to 107 (LGLFALFEMVVFLAILTIGLV).

Belongs to the complex I subunit 3 family. As to quaternary structure, NDH-1 is composed of 14 different subunits. Subunits NuoA, H, J, K, L, M, N constitute the membrane sector of the complex.

The protein resides in the cell membrane. It catalyses the reaction a quinone + NADH + 5 H(+)(in) = a quinol + NAD(+) + 4 H(+)(out). Its function is as follows. NDH-1 shuttles electrons from NADH, via FMN and iron-sulfur (Fe-S) centers, to quinones in the respiratory chain. The immediate electron acceptor for the enzyme in this species is believed to be ubiquinone. Couples the redox reaction to proton translocation (for every two electrons transferred, four hydrogen ions are translocated across the cytoplasmic membrane), and thus conserves the redox energy in a proton gradient. The protein is NADH-quinone oxidoreductase subunit A of Herpetosiphon aurantiacus (strain ATCC 23779 / DSM 785 / 114-95).